Consider the following 207-residue polypeptide: Holliday junction branch migration complex subunit RuvA (207 aa).

A domain I region spans residues 1 to 65; the sequence is MYDYIRGILT…ETEHVLYGFS (65 aa). A domain II region spans residues 66–144; it reads SRRERECFRM…DLLPLDSKAI (79 aa). Residues 145–155 are flexible linker; that stretch reads ASWESVKPSCM. Positions 155 to 207 are domain III; it reads MDEGIQALAALGYSKPSAERMIAEAMSELPENASLAEILPIALKKNLQGLNKS.

This sequence belongs to the RuvA family. As to quaternary structure, homotetramer. Forms an RuvA(8)-RuvB(12)-Holliday junction (HJ) complex. HJ DNA is sandwiched between 2 RuvA tetramers; dsDNA enters through RuvA and exits via RuvB. An RuvB hexamer assembles on each DNA strand where it exits the tetramer. Each RuvB hexamer is contacted by two RuvA subunits (via domain III) on 2 adjacent RuvB subunits; this complex drives branch migration. In the full resolvosome a probable DNA-RuvA(4)-RuvB(12)-RuvC(2) complex forms which resolves the HJ.

Its subcellular location is the cytoplasm. In terms of biological role, the RuvA-RuvB-RuvC complex processes Holliday junction (HJ) DNA during genetic recombination and DNA repair, while the RuvA-RuvB complex plays an important role in the rescue of blocked DNA replication forks via replication fork reversal (RFR). RuvA specifically binds to HJ cruciform DNA, conferring on it an open structure. The RuvB hexamer acts as an ATP-dependent pump, pulling dsDNA into and through the RuvAB complex. HJ branch migration allows RuvC to scan DNA until it finds its consensus sequence, where it cleaves and resolves the cruciform DNA. The sequence is that of Holliday junction branch migration complex subunit RuvA from Chlamydia caviae (strain ATCC VR-813 / DSM 19441 / 03DC25 / GPIC) (Chlamydophila caviae).